The chain runs to 316 residues: Transaldolase (316 aa).

K125 functions as the Schiff-base intermediate with substrate in the catalytic mechanism.

It belongs to the transaldolase family. Type 1 subfamily. As to quaternary structure, homodimer.

The protein resides in the cytoplasm. It catalyses the reaction D-sedoheptulose 7-phosphate + D-glyceraldehyde 3-phosphate = D-erythrose 4-phosphate + beta-D-fructose 6-phosphate. It participates in carbohydrate degradation; pentose phosphate pathway; D-glyceraldehyde 3-phosphate and beta-D-fructose 6-phosphate from D-ribose 5-phosphate and D-xylulose 5-phosphate (non-oxidative stage): step 2/3. Functionally, transaldolase is important for the balance of metabolites in the pentose-phosphate pathway. This Acidovorax ebreus (strain TPSY) (Diaphorobacter sp. (strain TPSY)) protein is Transaldolase.